The chain runs to 213 residues: Ribosomal RNA large subunit methyltransferase E (213 aa).

Residues Gly-68, Trp-70, Asp-88, Asp-104, and Asp-127 each contribute to the S-adenosyl-L-methionine site. Residue Lys-167 is the Proton acceptor of the active site.

It belongs to the class I-like SAM-binding methyltransferase superfamily. RNA methyltransferase RlmE family.

Its subcellular location is the cytoplasm. It carries out the reaction uridine(2552) in 23S rRNA + S-adenosyl-L-methionine = 2'-O-methyluridine(2552) in 23S rRNA + S-adenosyl-L-homocysteine + H(+). Specifically methylates the uridine in position 2552 of 23S rRNA at the 2'-O position of the ribose in the fully assembled 50S ribosomal subunit. This Neorickettsia sennetsu (strain ATCC VR-367 / Miyayama) (Ehrlichia sennetsu) protein is Ribosomal RNA large subunit methyltransferase E.